The chain runs to 625 residues: Chaperone protein HtpG (625 aa).

Residues 1–339 (MNKQTLSFQA…SSDLPLNVSR (339 aa)) form an a; substrate-binding region. Positions 340–557 (ELLQESRDVK…DGDISGHLAR (218 aa)) are b. The c stretch occupies residues 558-625 (LLKQAGQSAP…YVQRVNRLLV (68 aa)).

Belongs to the heat shock protein 90 family. As to quaternary structure, homodimer.

The protein localises to the cytoplasm. Molecular chaperone. Has ATPase activity. This chain is Chaperone protein HtpG, found in Methylibium petroleiphilum (strain ATCC BAA-1232 / LMG 22953 / PM1).